Here is a 69-residue protein sequence, read N- to C-terminus: Defensin-like protein 166 (69 aa).

Positions 1–15 are cleaved as a signal peptide; that stretch reads MIIVIIFLVIYFNNQ. 4 disulfide bridges follow: Cys19–Cys68, Cys24–Cys44, Cys29–Cys62, and Cys33–Cys64.

Belongs to the DEFL family.

The protein resides in the secreted. In Arabidopsis thaliana (Mouse-ear cress), this protein is Defensin-like protein 166.